The primary structure comprises 452 residues: Zinc finger protein GAI-ASSOCIATED FACTOR 1 (452 aa).

Over residues 1–32 (MPVDLDNSSTVSGEASVSISSTGNQNPLPNST) the composition is skewed to polar residues. The disordered stretch occupies residues 1–47 (MPVDLDNSSTVSGEASVSISSTGNQNPLPNSTGKKKRNLPGMPDPES). Serine 53 carries the phosphoserine modification. 2 C2H2-type zinc fingers span residues 63-85 (FVCE…RRGH) and 104-134 (YVCP…CRKH). A Nuclear localization signal motif is present at residues 126–133 (IKKHFCRK). Residues 139 to 162 (WKCDKCSKKYAVQSDWKAHSKICG) form a C2H2-type 2; degenerate zinc finger. 8 residues coordinate Zn(2+): cysteine 141, cysteine 144, histidine 157, cysteine 161, cysteine 168, cysteine 170, histidine 183, and cysteine 187. The CCHC-type 2; atypical zinc-finger motif lies at 166-189 (YKCDCGTLFSRRDSFITHRAFCDA). An SHR-binding region spans residues 176-188 (RRDSFITHRAFCD). Residues 196–254 (RSHHSQSKKQNPEILTRKNPVPNPVPAPVDTESAKIKSSSTLTIKQSESPKTPPEIVQE) are disordered. Polar residues predominate over residues 231 to 245 (IKSSSTLTIKQSESP).

Interacts with the DELLA proteins (e.g. GAI/RGA2, RGA, RGL1, RGL2 and RGLG3), acting as coactivators and with TPR1 and TPR4, acting as a corepressors, at the promoter of GA20OX2 gene. In terms of tissue distribution, observed in vegetative tissues. Mainly expressed in hypocotyls, petioles, shoot apices, root tips, and trichomes, and, at low levels, in leaves, stems and flowers.

It is found in the nucleus. With respect to regulation, transcription activation is repressed by gibberellic acid GA(3) in the presence of TPR4. In terms of biological role, transcription factor that acts as a positive regulator of gibberellin (GA) action, homeostasis and signaling. GA converts the GAF1 complex from transcriptional activator to repressor via the degradation of DELLA proteins. The polypeptide is Zinc finger protein GAI-ASSOCIATED FACTOR 1 (Arabidopsis thaliana (Mouse-ear cress)).